Reading from the N-terminus, the 464-residue chain is MTSSLSLHSSFVPSFADLSDRGLISKNSPTSVSISKVPTWEKKQISNRNSFKLNCVMEKSVDGQTHSTVNNTTDSLNTMNIKEEASVSTLLVNLDNKFDPFDAMSTPLYQTATFKQPSAIENGPYDYTRSGNPTRDALESLLAKLDKADRAFCFTSGMAALSAVTHLIKNGEEIVAGDDVYGGSDRLLSQVVPRSGVVVKRVNTTKLDEVAAAIGPQTKLVWLESPTNPRQQISDIRKISEMAHAQGALVLVDNSIMSPVLSRPLELGADIVMHSATKFIAGHSDVMAGVLAVKGEKLAKEVYFLQNSEGSGLAPFDCWLCLRGIKTMALRIEKQQENARKIAMYLSSHPRVKKVYYAGLPDHPGHHLHFSQAKGAGSVFSFITGSVALSKHLVETTKYFSIAVSFGSVKSLISMPCFMSHASIPAEVREARGLTEDLVRISAGIEDVDDLISDLDIAFKTFPL.

The transit peptide at M1–C55 directs the protein to the chloroplast. Positions 127, 129, 157, 158, 275, and 277 each coordinate pyridoxal 5'-phosphate. An N6-(pyridoxal phosphate)lysine modification is found at K278.

This sequence belongs to the trans-sulfuration enzymes family. Forms homodimers. May form homotetramers from two homodimers. Requires pyridoxal 5'-phosphate as cofactor.

The protein localises to the plastid. Its subcellular location is the chloroplast. The catalysed reaction is L,L-cystathionine + H2O = L-homocysteine + pyruvate + NH4(+). It catalyses the reaction an S-substituted L-cysteine + H2O = a thiol + pyruvate + NH4(+). It participates in amino-acid biosynthesis; L-methionine biosynthesis via de novo pathway; L-homocysteine from L-cystathionine: step 1/1. Catalyzes the penultimate step in the de novo biosynthesis of methionine. Its role in methionine metabolism may affect plant development in different organs, probably by modifying plant auxin transport. Its cysteine desulfhydrase activity may be involved in hydrogen sulfur production using L-cysteine as a substrate. The chain is Cystathionine beta-lyase, chloroplastic from Arabidopsis thaliana (Mouse-ear cress).